The primary structure comprises 72 residues: Brevinin-2SN3 (72 aa).

Positions 1 to 22 (MFTLKKPLLLLVFLGMISLSLC) are cleaved as a signal peptide. The propeptide at 23–40 (QDERGADEDDGGEMTEEE) is removed in mature form. Cysteine 66 and cysteine 72 are oxidised to a cystine.

This sequence belongs to the frog skin active peptide (FSAP) family. Brevinin subfamily. In terms of tissue distribution, expressed by the skin glands.

It is found in the secreted. Functionally, antimicrobial peptide. Active against a variety of Gram-negative and Gram-positive bacterial strains. Active against fungus C.glabrata 090902 but not against C.albicans ATCC 10231. Shows hemolytic activity against human erythrocytes. This is Brevinin-2SN3 from Sylvirana spinulosa (Fine-spined frog).